The sequence spans 101 residues: UPF0213 protein VC0395_0675/VC395_A0575 (101 aa).

Residues 9–85 (SPWFVYLVRC…KALSKSQKEA (77 aa)) enclose the GIY-YIG domain.

It belongs to the UPF0213 family.

This Vibrio cholerae serotype O1 (strain ATCC 39541 / Classical Ogawa 395 / O395) protein is UPF0213 protein VC0395_0675/VC395_A0575.